The sequence spans 264 residues: uncharacterized protein (264 aa).

Residues 1-22 (MIHSKKLTLGICLVLLIILIGG) form the signal peptide. Cysteine 23 is lipidated: N-palmitoyl cysteine. The S-diacylglycerol cysteine moiety is linked to residue cysteine 23.

Belongs to the staphylococcal tandem lipoprotein family.

It is found in the cell membrane. This is an uncharacterized protein from Staphylococcus aureus (strain N315).